The chain runs to 185 residues: Peptide methionine sulfoxide reductase MsrA (185 aa).

C12 is an active-site residue.

It belongs to the MsrA Met sulfoxide reductase family.

It carries out the reaction L-methionyl-[protein] + [thioredoxin]-disulfide + H2O = L-methionyl-(S)-S-oxide-[protein] + [thioredoxin]-dithiol. The enzyme catalyses [thioredoxin]-disulfide + L-methionine + H2O = L-methionine (S)-S-oxide + [thioredoxin]-dithiol. Has an important function as a repair enzyme for proteins that have been inactivated by oxidation. Catalyzes the reversible oxidation-reduction of methionine sulfoxide in proteins to methionine. This Granulibacter bethesdensis (strain ATCC BAA-1260 / CGDNIH1) protein is Peptide methionine sulfoxide reductase MsrA.